The primary structure comprises 628 residues: DNA ligase (628 aa).

Residues 36 to 40, 85 to 86, and Glu117 each bind NAD(+); these read DVEYD and SL. Lys119 (N6-AMP-lysine intermediate) is an active-site residue. Residues Arg140, Glu174, Lys309, and Lys333 each coordinate NAD(+). Cys427, Cys430, Cys446, and Cys452 together coordinate Zn(2+).

This sequence belongs to the NAD-dependent DNA ligase family. LigA subfamily. Mg(2+) is required as a cofactor. Requires Mn(2+) as cofactor.

It carries out the reaction NAD(+) + (deoxyribonucleotide)n-3'-hydroxyl + 5'-phospho-(deoxyribonucleotide)m = (deoxyribonucleotide)n+m + AMP + beta-nicotinamide D-nucleotide.. Its function is as follows. DNA ligase that catalyzes the formation of phosphodiester linkages between 5'-phosphoryl and 3'-hydroxyl groups in double-stranded DNA using NAD as a coenzyme and as the energy source for the reaction. It is essential for DNA replication and repair of damaged DNA. The polypeptide is DNA ligase (Tropheryma whipplei (strain TW08/27) (Whipple's bacillus)).